The following is an 81-amino-acid chain: Sec-independent protein translocase protein TatA (81 aa).

A helical membrane pass occupies residues 1 to 21 (MGMPSGQELLIILAIVVLLFG). A disordered region spans residues 45–81 (NEDDDTEVKSASTEAPKKVESAEEVASKESSKTPTQA). Over residues 59-75 (APKKVESAEEVASKESS) the composition is skewed to basic and acidic residues.

Belongs to the TatA/E family. The Tat system comprises two distinct complexes: a TatABC complex, containing multiple copies of TatA, TatB and TatC subunits, and a separate TatA complex, containing only TatA subunits. Substrates initially bind to the TatABC complex, which probably triggers association of the separate TatA complex to form the active translocon.

The protein resides in the cell inner membrane. In terms of biological role, part of the twin-arginine translocation (Tat) system that transports large folded proteins containing a characteristic twin-arginine motif in their signal peptide across membranes. TatA could form the protein-conducting channel of the Tat system. In Sulfurimonas denitrificans (strain ATCC 33889 / DSM 1251) (Thiomicrospira denitrificans (strain ATCC 33889 / DSM 1251)), this protein is Sec-independent protein translocase protein TatA.